We begin with the raw amino-acid sequence, 332 residues long: dTDP-3,4-didehydro-2,6-dideoxy-alpha-D-glucose 3-reductase (332 aa).

An NADP(+)-binding site is contributed by 17-23 (CADIAWR). Residue arginine 24 coordinates substrate. Residues 42–43 (SR), tyrosine 63, leucine 79, and histidine 84 contribute to the NADP(+) site. Catalysis depends on lysine 102, which acts as the Proton donor. NADP(+) is bound by residues arginine 170 and aspartate 182. Residues tyrosine 240 and threonine 260 each coordinate substrate.

This sequence belongs to the Gfo/Idh/MocA family. Homotetramer; dimer of dimers.

The enzyme catalyses dTDP-4-dehydro-2,6-dideoxy-alpha-D-glucose + NADP(+) = dTDP-3,4-didehydro-2,6-dideoxy-alpha-D-glucose + NADPH + H(+). It functions in the pathway antibiotic biosynthesis. Involved in the biosynthesis of L-digitoxose, an unusual dideoxysugar attached to various pharmacologically active natural products, including the antitumor antibiotic tetrocarcin A, and the antibiotics kijanimicin and jadomycin B. Catalyzes the reduction of the C-3 keto moiety of dTDP-3,4-diketo-2,6-dideoxy-alpha-D-glucose to yield dTDP-4-keto-2,6-dideoxy-alpha-D-glucose. Also able to reduce dTDP-3-keto-6-deoxy-D-galactose and dTDP-3-keto-6-deoxy-D-glucose to yield dTDP-fucose and dTDP-quinovose, respectively. This is dTDP-3,4-didehydro-2,6-dideoxy-alpha-D-glucose 3-reductase from Actinomadura kijaniata.